The chain runs to 394 residues: 1-deoxy-D-xylulose 5-phosphate reductoisomerase (394 aa).

NADPH contacts are provided by Thr10, Gly11, Ser12, Ile13, Gly38, Arg39, Asn40, and Asn123. Lys124 contributes to the 1-deoxy-D-xylulose 5-phosphate binding site. An NADPH-binding site is contributed by Glu125. Asp149 serves as a coordination point for Mn(2+). Ser150, Glu151, Ser175, and His198 together coordinate 1-deoxy-D-xylulose 5-phosphate. Glu151 is a Mn(2+) binding site. Gly204 contributes to the NADPH binding site. 4 residues coordinate 1-deoxy-D-xylulose 5-phosphate: Ser211, Asn216, Lys217, and Glu220. Position 220 (Glu220) interacts with Mn(2+).

It belongs to the DXR family. Mg(2+) serves as cofactor. The cofactor is Mn(2+).

It carries out the reaction 2-C-methyl-D-erythritol 4-phosphate + NADP(+) = 1-deoxy-D-xylulose 5-phosphate + NADPH + H(+). Its pathway is isoprenoid biosynthesis; isopentenyl diphosphate biosynthesis via DXP pathway; isopentenyl diphosphate from 1-deoxy-D-xylulose 5-phosphate: step 1/6. In terms of biological role, catalyzes the NADPH-dependent rearrangement and reduction of 1-deoxy-D-xylulose-5-phosphate (DXP) to 2-C-methyl-D-erythritol 4-phosphate (MEP). The sequence is that of 1-deoxy-D-xylulose 5-phosphate reductoisomerase from Cereibacter sphaeroides (strain ATCC 17023 / DSM 158 / JCM 6121 / CCUG 31486 / LMG 2827 / NBRC 12203 / NCIMB 8253 / ATH 2.4.1.) (Rhodobacter sphaeroides).